The sequence spans 208 residues: UPF0637 protein Bcer98_2662 (208 aa).

The protein belongs to the UPF0637 family.

This chain is UPF0637 protein Bcer98_2662, found in Bacillus cytotoxicus (strain DSM 22905 / CIP 110041 / 391-98 / NVH 391-98).